A 576-amino-acid polypeptide reads, in one-letter code: Arginine--tRNA ligase (576 aa).

The 'HIGH' region motif lies at 126-136 (ANPTGPMHIGH).

It belongs to the class-I aminoacyl-tRNA synthetase family. In terms of assembly, monomer.

The protein resides in the cytoplasm. The enzyme catalyses tRNA(Arg) + L-arginine + ATP = L-arginyl-tRNA(Arg) + AMP + diphosphate. The chain is Arginine--tRNA ligase from Rickettsia canadensis (strain McKiel).